A 272-amino-acid chain; its full sequence is MAVPQPFPSGPHLQPAGALMEPQPSPRSLAEGFLQEELRLNDELRQLQFSELVGIVYNPVEYAWEPHRSYVTRYCQGPKQVLFLGMNPGPFGMAQTGVPFGEVSVVRDWLGLGGPVRTPPQEHPKRPVLGLECPQSEVSGARFWGFFRNLCGQPEVFFRHCFVHNLCPLLLLAPSGRNITPAELPAKQREQLLGVCDAALCRQVQLLGVRLVVGVGRVAEQRARRALASLMPEVQVEGLLHPSPRSPQANKGWEAVAKERLNELGLLPLLTS.

Residues 1-27 (MAVPQPFPSGPHLQPAGALMEPQPSPR) form a disordered region. Positions 86, 100, and 165 each coordinate substrate. The interval 175–189 (SGRNITPAELPAKQR) is DNA-binding. Histidine 241 is a substrate binding site.

Belongs to the uracil-DNA glycosylase (UDG) superfamily. SMUG1 family.

The protein localises to the nucleus. Functionally, recognizes base lesions in the genome and initiates base excision DNA repair. Acts as a monofunctional DNA glycosylase specific for uracil (U) residues in DNA with a preference for single-stranded DNA substrates. The activity is greater toward mismatches (U/G) compared to matches (U/A). Excises uracil (U), 5-formyluracil (fU) and uracil derivatives bearing an oxidized group at C5 [5-hydroxyuracil (hoU) and 5-hydroxymethyluracil (hmU)] in ssDNA and dsDNA, but not analogous cytosine derivatives (5-hydroxycytosine and 5-formylcytosine), nor other oxidized bases. The activity is damage-specific and salt-dependent. The substrate preference is the following: ssDNA &gt; dsDNA (G pair) = dsDNA (A pair) at low salt concentration, and dsDNA (G pair) &gt; dsDNA (A pair) &gt; ssDNA at high salt concentration. This is Single-strand selective monofunctional uracil DNA glycosylase (SMUG1) from Bos taurus (Bovine).